The sequence spans 151 residues: Neuroglobin (151 aa).

A Globin domain is found at 1–149; that stretch reads MERPEPELIR…VVQAMSRGWD (149 aa). Residues Cys-46 and Cys-55 are joined by a disulfide bond. Heme b contacts are provided by His-64 and His-96.

This sequence belongs to the globin family. In terms of assembly, monomer. Homodimer and homotetramer; disulfide-linked. Mainly monomeric but also detected as part of homodimers and homotetramers. Interacts with 14-3-3 proteins; regulates the phosphorylation of NGB. Could interact (ferrous form) with G-alpha(i) proteins (GTP-bound form). Phosphorylated during hypoxia by ERK1/ERK2. Phosphorylation regulates the heme pocket hexacoordination preventing the association of His-64 with the heme metal center. Thereby, promotes the access of dioxygen and nitrite to the heme and stimulates the nitrite reductase activity. Phosphorylation during hypoxia is stabilized by 14-3-3 proteins. In terms of processing, an intramolecular Cys-46/Cys-55 disulfide bond, not necessarily present in orthologs, regulates the heme pocket hexacoordination preventing the association of His-64 with the heme metal center. Thereby, promotes the access of dioxygen and nitrite to the heme and stimulates the nitrite reductase activity. In terms of tissue distribution, predominantly expressed in brain, the strongest expression is seen in the frontal lobe, the subthalamic nucleus and the thalamus.

It localises to the cytoplasm. Its subcellular location is the cytosol. The protein resides in the mitochondrion matrix. It carries out the reaction Fe(III)-heme b-[protein] + nitric oxide + H2O = Fe(II)-heme b-[protein] + nitrite + 2 H(+). Monomeric globin with a bis-histidyl six-coordinate heme-iron atom through which it can bind dioxygen, carbon monoxide and nitric oxide. Could help transport oxygen and increase its availability to the metabolically active neuronal tissues, though its low quantity in tissues as well as its high affinity for dioxygen, which may limit its oxygen-releasing ability, argue against it. The ferrous/deoxygenated form exhibits a nitrite reductase activity and it could produce nitric oxide which in turn inhibits cellular respiration in response to hypoxia. In its ferrous/deoxygenated state, it may also exhibit GDI (Guanine nucleotide Dissociation Inhibitor) activity toward heterotrimeric G-alpha proteins, thereby regulating signal transduction to facilitate neuroprotective responses in the wake of hypoxia and associated oxidative stress. The protein is Neuroglobin of Homo sapiens (Human).